Reading from the N-terminus, the 329-residue chain is GTP 3',8-cyclase (329 aa).

Residues 1 to 229 (MNQIDYLRIS…EGQVRGNGPA (229 aa)) enclose the Radical SAM core domain. Arg-8 provides a ligand contact to GTP. [4Fe-4S] cluster-binding residues include Cys-15 and Cys-19. Tyr-21 is a binding site for S-adenosyl-L-methionine. Cys-22 is a binding site for [4Fe-4S] cluster. A GTP-binding site is contributed by Arg-60. Residue Gly-64 participates in S-adenosyl-L-methionine binding. Thr-91 provides a ligand contact to GTP. Ser-115 lines the S-adenosyl-L-methionine pocket. Lys-155 contacts GTP. Met-189 contacts S-adenosyl-L-methionine. The [4Fe-4S] cluster site is built by Cys-252 and Cys-255. 257-259 (RLR) contributes to the GTP binding site. Cys-269 lines the [4Fe-4S] cluster pocket.

This sequence belongs to the radical SAM superfamily. MoaA family. Monomer and homodimer. The cofactor is [4Fe-4S] cluster.

It catalyses the reaction GTP + AH2 + S-adenosyl-L-methionine = (8S)-3',8-cyclo-7,8-dihydroguanosine 5'-triphosphate + 5'-deoxyadenosine + L-methionine + A + H(+). The protein operates within cofactor biosynthesis; molybdopterin biosynthesis. Functionally, catalyzes the cyclization of GTP to (8S)-3',8-cyclo-7,8-dihydroguanosine 5'-triphosphate. The polypeptide is GTP 3',8-cyclase (Microcystis aeruginosa (strain NIES-843 / IAM M-2473)).